Consider the following 327-residue polypeptide: Cobalamin biosynthesis protein CobD (327 aa).

A run of 4 helical transmembrane segments spans residues 60–80 (GMWL…VLEL), 82–102 (LPFA…VLLA), 159–179 (DGIV…LFAY), and 304–324 (LFWS…LIGL).

It belongs to the CobD/CbiB family.

It localises to the cell membrane. Its pathway is cofactor biosynthesis; adenosylcobalamin biosynthesis. Its function is as follows. Converts cobyric acid to cobinamide by the addition of aminopropanol on the F carboxylic group. The protein is Cobalamin biosynthesis protein CobD of Brucella anthropi (strain ATCC 49188 / DSM 6882 / CCUG 24695 / JCM 21032 / LMG 3331 / NBRC 15819 / NCTC 12168 / Alc 37) (Ochrobactrum anthropi).